The sequence spans 484 residues: Suppressor of fused homolog (484 aa).

The segment at 1-21 (MAELRPSVAPGPAAPPASGPS) is disordered. Residues 12-21 (PAAPPASGPS) are compositionally biased toward pro residues. A Glycyl lysine isopeptide (Lys-Gly) (interchain with G-Cter in ubiquitin) cross-link involves residue Lys-257. Residues 279–360 (SRPPEDEEDS…SSTAIIPHEL (82 aa)) form a disordered region. Ser-301 carries the phosphoserine modification. Lys-303 bears the N6-acetyllysine mark. Lys-321 is covalently cross-linked (Glycyl lysine isopeptide (Lys-Gly) (interchain with G-Cter in SUMO2)). The segment covering 336–347 (THDRAPSRKDSL) has biased composition (basic and acidic residues). Ser-342, Ser-346, and Ser-352 each carry phosphoserine. Thr-353 carries the post-translational modification Phosphothreonine. Ser-481 is modified (phosphoserine).

Belongs to the SUFU family. As to quaternary structure, may form homodimers. Interacts with ULK3; inactivating the protein kinase activity of ULK3. Interacts with RAB23. Part of a DNA-bound corepressor complex containing SAP18, GLI1 and SIN3. Part of a complex containing CTNNB1. Binds BTRC, GLI2, GLI3, SAP18 and STK36. Binds both free and DNA-bound GLI1. Interacts with KIF7. Interacts with GLI3FL and this interaction regulates the formation of either repressor or activator forms of GLI3. Its association with GLI3FL is regulated by Hh signaling and dissociation of the SUFU-GLI3 interaction requires the presence of the ciliary motor KIF3A. Polyubiquitinated at Lys-257 by the SCF(FBXL17) complex, leading to its subsequent degradation and allowing the release of GLI1 for proper hedgehog/smoothened signal transduction. Ubiquitination is impaired by phosphorylation at Ser-342, Ser-346, Ser-352 and Thr-353. Post-translationally, phosphorylation at Ser-342, Ser-346, Ser-352 and Thr-353 prevents ubiquitination by the SCF(FBXL17) complex. As to expression, widely expressed in adult and fetal tissues.

It is found in the cytoplasm. The protein localises to the nucleus. Functionally, negative regulator in the hedgehog/smoothened signaling pathway. Down-regulates GLI1-mediated transactivation of target genes. Part of a corepressor complex that acts on DNA-bound GLI1. May also act by linking GLI1 to BTRC and thereby targeting GLI1 to degradation by the proteasome. Sequesters GLI1, GLI2 and GLI3 in the cytoplasm, this effect is overcome by binding of STK36 to both SUFU and a GLI protein. Negative regulator of beta-catenin signaling. Regulates the formation of either the repressor form (GLI3R) or the activator form (GLI3A) of the full-length form of GLI3 (GLI3FL). GLI3FL is complexed with SUFU in the cytoplasm and is maintained in a neutral state. Without the Hh signal, the SUFU-GLI3 complex is recruited to cilia, leading to the efficient processing of GLI3FL into GLI3R. When Hh signaling is initiated, SUFU dissociates from GLI3FL and the latter translocates to the nucleus, where it is phosphorylated, destabilized, and converted to a transcriptional activator (GLI3A). Required for normal embryonic development. Required for the proper formation of hair follicles and the control of epidermal differentiation. The polypeptide is Suppressor of fused homolog (Mus musculus (Mouse)).